The sequence spans 230 residues: Cell division ATP-binding protein FtsE (230 aa).

The region spanning 4 to 229 (IEMRDVVKKY…DESKGEYGYD (226 aa)) is the ABC transporter domain. Residue 37 to 44 (GPSGAGKS) participates in ATP binding.

The protein belongs to the ABC transporter superfamily. In terms of assembly, homodimer. Interacts with FtsX; forms a membrane-associated complex. Interacts with pcsB.

It localises to the cell membrane. The catalysed reaction is ATP + H2O = ADP + phosphate + H(+). In terms of biological role, part of the ABC transporter FtsEX involved in cellular division. Has ATPase activity. Essential for cell division and viability. This is Cell division ATP-binding protein FtsE from Streptococcus pneumoniae serotype 2 (strain D39 / NCTC 7466).